The chain runs to 78 residues: ATP synthase subunit c (78 aa).

Transmembrane regions (helical) follow at residues 12–32 (IGAG…GHVV) and 54–74 (FIGI…ALLL).

The protein belongs to the ATPase C chain family. In terms of assembly, F-type ATPases have 2 components, F(1) - the catalytic core - and F(0) - the membrane proton channel. F(1) has five subunits: alpha(3), beta(3), gamma(1), delta(1), epsilon(1). F(0) has four main subunits: a(1), b(1), b'(1) and c(10-14). The alpha and beta chains form an alternating ring which encloses part of the gamma chain. F(1) is attached to F(0) by a central stalk formed by the gamma and epsilon chains, while a peripheral stalk is formed by the delta, b and b' chains.

It is found in the cellular chromatophore membrane. F(1)F(0) ATP synthase produces ATP from ADP in the presence of a proton or sodium gradient. F-type ATPases consist of two structural domains, F(1) containing the extramembraneous catalytic core and F(0) containing the membrane proton channel, linked together by a central stalk and a peripheral stalk. During catalysis, ATP synthesis in the catalytic domain of F(1) is coupled via a rotary mechanism of the central stalk subunits to proton translocation. In terms of biological role, key component of the F(0) channel; it plays a direct role in translocation across the membrane. A homomeric c-ring of between 10-14 subunits forms the central stalk rotor element with the F(1) delta and epsilon subunits. The polypeptide is ATP synthase subunit c (Rhodobacter capsulatus (Rhodopseudomonas capsulata)).